The chain runs to 263 residues: MIEARDVSVDIAGKRIVGGVDFDARPGEVAAIVGPNGSGKTTFLKALSGEFAYTGRIALNGHNLSSMRPAEMAVHRAVLPQATTLSFPFTVREVVKLGLVGGRSGALPGEDARLPERALARVDLDGFAGRFYQELSGGEQQRVQLARVLCQVWAPVLDGKPRYLFLDEPVSSLDIKHQLIIMNIARDFAKRGGGVVAILHDLNLTSMYADRIFVMHRGRLAATGSPQDVLSDDLIEKVFDCRLRVGVLPAGNMPFVLPQSSVY.

An ABC transporter domain is found at 2-242; that stretch reads IEARDVSVDI…DLIEKVFDCR (241 aa). 34 to 41 serves as a coordination point for ATP; sequence GPNGSGKT.

The protein belongs to the ABC transporter superfamily. Heme (hemin) importer (TC 3.A.1.14.5) family. As to quaternary structure, the complex is composed of two ATP-binding proteins (HmuV), two transmembrane proteins (HmuU) and a solute-binding protein (HmuT).

The protein resides in the cell inner membrane. Part of the ABC transporter complex HmuTUV involved in hemin import. Responsible for energy coupling to the transport system. The polypeptide is Hemin import ATP-binding protein HmuV (Mesorhizobium japonicum (strain LMG 29417 / CECT 9101 / MAFF 303099) (Mesorhizobium loti (strain MAFF 303099))).